A 248-amino-acid chain; its full sequence is Putative eukaryotic initiation factor 4A-like protein (248 aa).

A Q motif motif is present at residues V14 to M42. Residues I45–I239 form the Helicase ATP-binding domain. S58 to T65 is a binding site for ATP. Residues D185 to D188 carry the DEAD box motif.

Belongs to the DEAD box helicase family. eIF4A subfamily.

This is Putative eukaryotic initiation factor 4A-like protein from Dictyostelium discoideum (Social amoeba).